The sequence spans 563 residues: uncharacterized protein (563 aa).

The Cytoplasmic segment spans residues 1-13; the sequence is MASRSCICQVSAG. A helical membrane pass occupies residues 14 to 34; that stretch reads IIFLIGAALLVAGLVIVLNVF. Residues 35 to 528 are Lumenal-facing; that stretch reads PNIVNNQIND…LFTPVSTVNT (494 aa). N-linked (GlcNAc...) asparagine glycosylation is found at Asn43, Asn112, Asn133, Asn188, Asn265, Asn295, Asn315, and Asn502. The helical transmembrane segment at 529-549 threads the bilayer; that stretch reads ICWIAVGLGAGLIALSIVMVI. The Cytoplasmic portion of the chain corresponds to 550–563; that stretch reads VSFCCFRDEHHKTS.

Belongs to the CD36 family.

It localises to the membrane. This is an uncharacterized protein from Caenorhabditis elegans.